Consider the following 589-residue polypeptide: MHSEEKYLHIPNNTKYPEIIVEEEEEDPSEEERSELSETDDVATPLRPSDTFPFKRRNSPCSIKMSEEHLKRLREIACPSPTPTQCSTVSKHEFQNWRINEDVMKDMMHIGTICERENVCKTSKYVYTATMASYTVTEWKLKEGNTPDEIEKISRTIEDLCQLRHKRLAPMYGYHWRLETELMVFRAHVPSGTVADLVKVSAIPQETAVRYIVHVIDALAYLHERKHVHGKLNASNLLLTISNDILLADPFIEGLPSAQKRRALLASPPEAFRSLESYPCLTPSSDIWSVGCVLVTMLTRYPPFLEHYMHFHGESLHRELVSEWCTRRQLIYSSQTLIPSASKEICELIDQIFNVDPENRPSAQNLLESHGSKSRKASLRNSLASLTTAKEPDPPKPIDDFYVEREDDEEHRKIEELRELAERGNNEGGFIPFIRWYMSRILIFSVLLVKWIGMVLCAALSLAAVAGGVFFAIFLIYNGIQIACQCSLNEGFVVLIALILLPIIILLTTLCCNNSLDRYHADVESGKVEKSRFVMKTPEKDVIVGGYILVEGSPDHDKPAEVPRKLGISEGLQSTMGNTFLGYGVDKIA.

Residues 1 to 51 form a disordered region; that stretch reads MHSEEKYLHIPNNTKYPEIIVEEEEEDPSEEERSELSETDDVATPLRPSDT. The segment covering 20 to 41 has biased composition (acidic residues); it reads IVEEEEEDPSEEERSELSETDD. Residues 97 to 373 form the Protein kinase domain; the sequence is WRINEDVMKD…QNLLESHGSK (277 aa). 3 consecutive transmembrane segments (helical) span residues 429-449, 456-476, and 491-511; these read GFIP…VLLV, LCAA…IFLI, and GFVV…TTLC.

This sequence belongs to the protein kinase superfamily. STE Ser/Thr protein kinase family. Expressed in vulval and body wall muscles, hypodermis, seam cells and tissues next to pharynx and anus.

Its subcellular location is the membrane. Negatively regulates lifespan and health span probably by participating in nutrient sensing. This Caenorhabditis elegans protein is Protein drl-1.